Here is a 586-residue protein sequence, read N- to C-terminus: MGSCWSDGSYAGGGMVGVGGGANSSAATPNDAVDYYLKSRGYNGLFSQIELSFSASNLRDRDVISKSDAMVVVYTKGRDGTLAELFRSEVVLNSLNPKWIKNFTIGYQFEIVQTLLFRVYDIDTQFQNSKEELLKLDEQQFLGEATCTLSEVVTKSNRTIALELMRKEGVAAQTQPQHNGKLIVHAEESLASKTNTEIVFRGLNLESKDTFSKSDPFLVISKIVEHGTPIPVSKTEVLKNDPNPLWKPVSLSVQQVGSKDSPLVIECLDFNGNGNHDLIGKVQKSLSDLEKLHLAGQGINLALPTGVGHKHEDRVLKSQLFVDKFTETVQHTFLEYLASGFELNFMVAIDFTASNGNPRLPDSLHYIDPTGRLNAYQRAIVEVGEVLQFYDSDKRFPAWGFGARPIDIPVSHCFNLNGSSTYCEVDGIQGIMNAYNGALFNVSFAGPTLFGPVINAAATIASDSLAQSAKKYYVLLIITDGVITDLQETRDSIVSASDLPLSILIVGVGGADYKEMEVLDGDKGEKLESSSGRIASRDIVQFVALRDIQYGEVSVVEALLAELPTQFLTYMRNRNITPTTTTPSST.

The N-myristoyl glycine moiety is linked to residue glycine 2. 2 consecutive C2 domains span residues 25-164 and 176-303; these read SAAT…ALEL and PQHN…NLAL. Ca(2+) is bound by residues aspartate 62, aspartate 68, aspartate 121, and aspartate 123. Residues 344–563 enclose the VWFA domain; the sequence is NFMVAIDFTA…SVVEALLAEL (220 aa).

The protein belongs to the copine family. In terms of assembly, interacts with BAP1 and BAP2. Ca(2+) serves as cofactor. As to expression, expressed in roots, leaves and stems. Expressed in young growing tissues.

The protein localises to the cell membrane. Negative regulator of cell death and defense responses. May repress a number of R genes and may have effects in promoting growth and development. May function in membrane trafficking and in fusion of vesicles with plasma membrane. This chain is Protein BONZAI 2 (BON2), found in Arabidopsis thaliana (Mouse-ear cress).